We begin with the raw amino-acid sequence, 603 residues long: UvrABC system protein C (603 aa).

In terms of domain architecture, GIY-YIG spans Asp15–Ile92. Residues Lys197–Thr232 enclose the UVR domain.

Belongs to the UvrC family. Interacts with UvrB in an incision complex.

It is found in the cytoplasm. Its function is as follows. The UvrABC repair system catalyzes the recognition and processing of DNA lesions. UvrC both incises the 5' and 3' sides of the lesion. The N-terminal half is responsible for the 3' incision and the C-terminal half is responsible for the 5' incision. This Listeria monocytogenes serovar 1/2a (strain ATCC BAA-679 / EGD-e) protein is UvrABC system protein C.